We begin with the raw amino-acid sequence, 235 residues long: Orotidine 5'-phosphate decarboxylase (235 aa).

Residues D12, K34, 61–70 (DMKLLDIDNT), T116, R177, Q186, and R207 contribute to the substrate site. Residue K63 is the Proton donor of the active site.

The protein belongs to the OMP decarboxylase family. Type 1 subfamily. As to quaternary structure, homodimer.

It catalyses the reaction orotidine 5'-phosphate + H(+) = UMP + CO2. Its pathway is pyrimidine metabolism; UMP biosynthesis via de novo pathway; UMP from orotate: step 2/2. Catalyzes the decarboxylation of orotidine 5'-monophosphate (OMP) to uridine 5'-monophosphate (UMP). The polypeptide is Orotidine 5'-phosphate decarboxylase (Rhizobium leguminosarum bv. trifolii (strain WSM2304)).